We begin with the raw amino-acid sequence, 216 residues long: Redox-sensing transcriptional repressor Rex (216 aa).

Residues 16–55 (VYYRYLNVLLNANKHRVSSTELSEAVQVDSATIRRDFSYF) constitute a DNA-binding region (H-T-H motif). 90–95 (GVGSLG) contacts NAD(+).

Belongs to the transcriptional regulatory Rex family. As to quaternary structure, homodimer.

The protein localises to the cytoplasm. Modulates transcription in response to changes in cellular NADH/NAD(+) redox state. The sequence is that of Redox-sensing transcriptional repressor Rex from Limosilactobacillus fermentum (strain NBRC 3956 / LMG 18251) (Lactobacillus fermentum).